A 619-amino-acid polypeptide reads, in one-letter code: Xyloglucan galactosyltransferase MUR3 (619 aa).

The segment at 1 to 26 (MFPRVSMRRRSAEVSPTEPMEKGNGK) is disordered. At 1-33 (MFPRVSMRRRSAEVSPTEPMEKGNGKNQTNRIC) the chain is on the cytoplasmic side. A helical; Signal-anchor for type II membrane protein membrane pass occupies residues 34–54 (LLVALSLFFWALLLYFHFVVL). The Lumenal segment spans residues 55 to 619 (GTSNIDKQLQ…WKSEQRDKTQ (565 aa)). 7 N-linked (GlcNAc...) asparagine glycosylation sites follow: Asn-116, Asn-146, Asn-231, Asn-257, Asn-319, Asn-465, and Asn-482. The segment at 576 to 619 (HVWDPFFSKPKPGEDGSSDGNGGTTISADAAKNSWKSEQRDKTQ) is disordered. Residues 610 to 619 (WKSEQRDKTQ) show a composition bias toward basic and acidic residues.

This sequence belongs to the glycosyltransferase 47 family. Interacts with CSLC4 and FUT1. As to expression, ubiquitous.

It localises to the golgi apparatus. Its subcellular location is the golgi stack membrane. The protein resides in the golgi apparatus membrane. Involved in the attachment of the Gal residue on the third xylosyl unit within the XXXG core structure of xyloglucan, the principal glycan that interlaces the cellulose microfibrils in plant cell wall. Associates with other xyloglucan-synthesizing enzymes to form multiprotein complexes for xyloglucan synthesis in the Golgi. Interacts with actin and is required for the proper endomembrane organization and for the cell elongation. Not involved in the trafficking from the endoplasmic reticulum to the vacuoles. Involved in salt stress tolerance. Participates in the control of the expression of genes encoding for proteins involved in reactive oxygen species (ROS) detoxification under salt stress. May contribute to the maintenance of the proper organization of actin microfilaments during salt stress-induced ROS production. The sequence is that of Xyloglucan galactosyltransferase MUR3 from Arabidopsis thaliana (Mouse-ear cress).